A 1283-amino-acid polypeptide reads, in one-letter code: Oxysterol-binding protein homolog 2 (1283 aa).

The residue at position 2 (serine 2) is an N-acetylserine. Residue serine 7 is modified to Phosphoserine. ANK repeat units follow at residues 106–134 (NGNT…SIND) and 206–235 (TGTT…EATV). Residues 289 to 386 (PPTYKGFLKK…WVNAIQSAIR (98 aa)) enclose the PH domain. Serine 422, serine 445, serine 451, serine 455, serine 458, serine 459, and serine 486 each carry phosphoserine. At threonine 488 the chain carries Phosphothreonine. Composition is skewed to polar residues over residues 504–518 (SNTL…SGSG) and 530–551 (ANLS…NNYI). 2 disordered regions span residues 504–571 (SNTL…LGIN) and 702–721 (TAGN…DTTA). 2 positions are modified to phosphoserine: serine 512 and serine 515. Residues 554-568 (FEGDEANSDDEEEDL) show a composition bias toward acidic residues. The span at 707-716 (ESLENDKEQE) shows a compositional bias: basic and acidic residues. Position 717 is a phosphoserine (serine 717). Positions 745–751 (EFYDAAE) match the FFAT motif. The disordered stretch occupies residues 767 to 834 (STAAAPKHAP…SLKNFKAEDK (68 aa)). Threonine 783 is modified (phosphothreonine). Phosphoserine is present on serine 787. Basic and acidic residues-rich tracts occupy residues 791-810 (QDEK…KFEK) and 818-834 (DEPK…AEDK). 2 positions are modified to phosphoserine: serine 825 and serine 1151. The tract at residues 897 to 1268 (SLWAVLKSMV…KYWRYTGKYW (372 aa)) is OSBP-related domain (ORD).

This sequence belongs to the OSBP family. In terms of assembly, interacts with SCS2.

The protein resides in the cell membrane. The protein localises to the endoplasmic reticulum membrane. Its function is as follows. Lipid transport protein (LTP) involved in non-vesicular transfer of lipids between membranes. Functions in phosphoinositide-coupled directional transport of various lipids by carrying the lipid molecule in a hydrophobic pocket and transferring it between membranes through the cytosol. Involved in maintenance of intracellular sterol distribution and homeostasis. Binds and transports sterol. Plays a role in the positive regulation of vesicular transport of ceramide from the ER to the Golgi, negatively regulating COPII-mediated ER export of cargos. The sequence is that of Oxysterol-binding protein homolog 2 from Saccharomyces cerevisiae (strain ATCC 204508 / S288c) (Baker's yeast).